We begin with the raw amino-acid sequence, 104 residues long: Co-chaperonin GroES 5 (104 aa).

This sequence belongs to the GroES chaperonin family. As to quaternary structure, heptamer of 7 subunits arranged in a ring. Interacts with the chaperonin GroEL.

It is found in the cytoplasm. Together with the chaperonin GroEL, plays an essential role in assisting protein folding. The GroEL-GroES system forms a nano-cage that allows encapsulation of the non-native substrate proteins and provides a physical environment optimized to promote and accelerate protein folding. GroES binds to the apical surface of the GroEL ring, thereby capping the opening of the GroEL channel. The polypeptide is Co-chaperonin GroES 5 (Rhizobium meliloti (strain 1021) (Ensifer meliloti)).